The primary structure comprises 172 residues: Shikimate kinase (172 aa).

Position 11–16 (11–16 (GAGKST)) interacts with ATP. Residue S15 coordinates Mg(2+). Substrate contacts are provided by D33, R57, and G79. R117 lines the ATP pocket. R136 contacts substrate. R153 is an ATP binding site.

The protein belongs to the shikimate kinase family. In terms of assembly, monomer. The cofactor is Mg(2+).

It localises to the cytoplasm. It carries out the reaction shikimate + ATP = 3-phosphoshikimate + ADP + H(+). It functions in the pathway metabolic intermediate biosynthesis; chorismate biosynthesis; chorismate from D-erythrose 4-phosphate and phosphoenolpyruvate: step 5/7. Catalyzes the specific phosphorylation of the 3-hydroxyl group of shikimic acid using ATP as a cosubstrate. The protein is Shikimate kinase of Pseudomonas aeruginosa (strain LESB58).